Here is a 661-residue protein sequence, read N- to C-terminus: UvrABC system protein B (661 aa).

Residues alanine 25–arginine 182 form the Helicase ATP-binding domain. Position 38–45 (glycine 38–threonine 45) interacts with ATP. Residues tyrosine 91–isoleucine 114 carry the Beta-hairpin motif. The Helicase C-terminal domain maps to glutamine 430 to isoleucine 592. One can recognise a UVR domain in the interval lysine 621–alanine 656.

The protein belongs to the UvrB family. In terms of assembly, forms a heterotetramer with UvrA during the search for lesions. Interacts with UvrC in an incision complex.

The protein localises to the cytoplasm. The UvrABC repair system catalyzes the recognition and processing of DNA lesions. A damage recognition complex composed of 2 UvrA and 2 UvrB subunits scans DNA for abnormalities. Upon binding of the UvrA(2)B(2) complex to a putative damaged site, the DNA wraps around one UvrB monomer. DNA wrap is dependent on ATP binding by UvrB and probably causes local melting of the DNA helix, facilitating insertion of UvrB beta-hairpin between the DNA strands. Then UvrB probes one DNA strand for the presence of a lesion. If a lesion is found the UvrA subunits dissociate and the UvrB-DNA preincision complex is formed. This complex is subsequently bound by UvrC and the second UvrB is released. If no lesion is found, the DNA wraps around the other UvrB subunit that will check the other stand for damage. The chain is UvrABC system protein B from Rickettsia canadensis (strain McKiel).